The chain runs to 1021 residues: Inversin (1021 aa).

16 ANK repeats span residues 7 to 36 (QNPS…LRDS), 40 to 69 (FGRT…GINK), 73 to 102 (SQRT…DWRL), 106 to 137 (EEMT…EVDT), 141 to 170 (NKQT…NIGI), 174 to 206 (EGKI…TESL), 213 to 243 (EGRT…SVTA), 247 to 276 (LFRT…SGMI), 281 to 310 (QGAT…VRDE), 314 to 343 (EGRT…DIDI), 349 to 378 (YGGT…MVDP), 382 to 411 (MKHT…RVDL), 415 to 444 (DGHS…SPNL), 448 to 477 (AGRT…DPNI), 481 to 510 (EGRT…FPNH), and 516 to 546 (ERYT…SIAA). The short motif at 483–491 (RTALHWSCN) is the D-box 1 element. An IQ 1 domain is found at 548–577 (QDIAASSIQALYKGYKVRRAFRERKKLLMR). Basic and acidic residues-rich tracts occupy residues 579–598 (EQLR…REAE) and 653–669 (SRRE…REPE). Disordered regions lie at residues 579-602 (EQLR…QQLS), 632-691 (KDSV…KKCP), and 704-868 (GPDT…GTCS). Positions 722–731 (PAGSSRPGSA) are enriched in low complexity. Composition is skewed to polar residues over residues 759–781 (GAHS…TSKG) and 791–802 (TGSQPSNNTSVT). Positions 803-866 (RQKEKRQEKE…KEKEKKKDGT (64 aa)) are enriched in basic and acidic residues. A D-box 2 motif is present at residues 862 to 870 (KKDGTCSKN). The region spanning 869–898 (KNQAAVVIQRAWRRSCVRGRIRKVLCRSLK) is the IQ 2 domain.

As to quaternary structure, binds calmodulin via its IQ domains.

It is found in the cytoplasm. It localises to the cytoskeleton. Required for normal renal development and establishment of left-right axis. Probably acts as a molecular switch between different Wnt signaling pathways. Inhibits the canonical Wnt pathway by targeting cytoplasmic disheveled for degradation by the ubiquitin-proteasome. This suggests that it is required in renal development to oppose the repression of terminal differentiation of tubular epithelial cells by Wnt signaling. In Danio rerio (Zebrafish), this protein is Inversin (invs).